Here is a 115-residue protein sequence, read N- to C-terminus: Potassium-transporting ATPase potassium-binding subunit (115 aa).

Transmembrane regions (helical) follow at residues 8–28 (YFLL…VAFF) and 60–80 (SYCT…YGLL).

The protein belongs to the KdpA family. The system is composed of three essential subunits: KdpA, KdpB and KdpC.

It is found in the cell membrane. Its function is as follows. Part of the high-affinity ATP-driven potassium transport (or Kdp) system, which catalyzes the hydrolysis of ATP coupled with the electrogenic transport of potassium into the cytoplasm. This subunit binds the extracellular potassium ions and delivers the ions to the membrane domain of KdpB through an intramembrane tunnel. The polypeptide is Potassium-transporting ATPase potassium-binding subunit (Geobacillus stearothermophilus (Bacillus stearothermophilus)).